The primary structure comprises 1407 residues: DNA-directed RNA polymerase subunit beta' (1407 aa).

Residues C70, C72, C85, and C88 each coordinate Zn(2+). Positions 460, 462, and 464 each coordinate Mg(2+). Zn(2+) contacts are provided by C814, C888, C895, and C898.

It belongs to the RNA polymerase beta' chain family. As to quaternary structure, the RNAP catalytic core consists of 2 alpha, 1 beta, 1 beta' and 1 omega subunit. When a sigma factor is associated with the core the holoenzyme is formed, which can initiate transcription. It depends on Mg(2+) as a cofactor. The cofactor is Zn(2+).

The enzyme catalyses RNA(n) + a ribonucleoside 5'-triphosphate = RNA(n+1) + diphosphate. In terms of biological role, DNA-dependent RNA polymerase catalyzes the transcription of DNA into RNA using the four ribonucleoside triphosphates as substrates. In Salmonella paratyphi A (strain ATCC 9150 / SARB42), this protein is DNA-directed RNA polymerase subunit beta'.